We begin with the raw amino-acid sequence, 544 residues long: Chaperonin GroEL (544 aa).

Residues 30-33, Lys51, 87-91, Gly415, 480-482, and Asp496 each bind ATP; these read TLGP, DGTTT, and DAA.

It belongs to the chaperonin (HSP60) family. As to quaternary structure, forms a cylinder of 14 subunits composed of two heptameric rings stacked back-to-back. Interacts with the co-chaperonin GroES.

The protein resides in the cytoplasm. It carries out the reaction ATP + H2O + a folded polypeptide = ADP + phosphate + an unfolded polypeptide.. Functionally, together with its co-chaperonin GroES, plays an essential role in assisting protein folding. The GroEL-GroES system forms a nano-cage that allows encapsulation of the non-native substrate proteins and provides a physical environment optimized to promote and accelerate protein folding. The sequence is that of Chaperonin GroEL from Sulfurihydrogenibium sp. (strain YO3AOP1).